We begin with the raw amino-acid sequence, 352 residues long: Protein Wnt-4a (352 aa).

The signal sequence occupies residues 1 to 22 (MSSEYLIRSLLMLFLALFSANA). 11 disulfides stabilise this stretch: Cys78-Cys89, Cys128-Cys136, Cys138-Cys155, Cys206-Cys220, Cys208-Cys215, Cys280-Cys312, Cys297-Cys307, Cys311-Cys351, Cys327-Cys342, Cys329-Cys339, and Cys334-Cys335. An N-linked (GlcNAc...) asparagine glycan is attached at Asn88. Ser212 is lipidated: O-palmitoleoyl serine; by PORCN. An N-linked (GlcNAc...) asparagine glycan is attached at Asn298.

It belongs to the Wnt family. In terms of processing, palmitoleoylation is required for efficient binding to frizzled receptors. Depalmitoleoylation leads to Wnt signaling pathway inhibition. Caudal forebrain and neural keel, the floor plate, the gill slit and the developing pronephros.

The protein localises to the secreted. The protein resides in the extracellular space. Its subcellular location is the extracellular matrix. In terms of biological role, ligand for members of the frizzled family of seven transmembrane receptors. Plays an important role in embryonic development. The sequence is that of Protein Wnt-4a (wnt4a) from Danio rerio (Zebrafish).